The sequence spans 411 residues: Phospholipase A1-II 6 (411 aa).

Serine 226 serves as the catalytic Acyl-ester intermediate. Residues serine 226, aspartate 296, and histidine 334 each act as charge relay system in the active site.

It belongs to the AB hydrolase superfamily. Lipase family.

Its subcellular location is the cytoplasm. Acylhydrolase that catalyzes the hydrolysis of phospholipids at the sn-1 position. This Oryza sativa subsp. japonica (Rice) protein is Phospholipase A1-II 6.